A 427-amino-acid polypeptide reads, in one-letter code: CD209 antigen (427 aa).

Topologically, residues Met1–Cys37 are cytoplasmic. 3 consecutive short sequence motifs (endocytosis signal) follow at residues Leu14–Leu15, Glu16–Glu18, and Tyr31–Leu34. A helical; Signal-anchor for type II membrane protein transmembrane segment spans residues Leu38–Val58. At Gln59–Glu427 the chain is on the extracellular side. Asn80 carries N-linked (GlcNAc...) asparagine glycosylation. Tandem repeats lie at residues Lys96–Ser118, Lys119–Ser141, Lys142–Ser164, Lys165–Ser187, Lys188–Ser210, Lys211–Ser233, Lys234–Ser256, and Lys257–Pro280. The tract at residues Lys96–Pro280 is 8 X approximate tandem repeats. Intrachain disulfides connect Cys279/Cys290, Cys307/Cys400, and Cys379/Cys392. A C-type lectin domain is found at Phe286–Lys401. Residues Glu370, Asn372, Val374, Glu377, Asn388, and Asp389 each coordinate Ca(2+).

As to quaternary structure, homotetramer. Interacts with C1QBP; the interaction is indicative for a C1q:C1QBP:CD209 signaling complex. Interacts with ICAM2 and ICAM3 by binding to mannose-like carbohydrates. Interacts (via C-type lectin domain) with CEACAM1 (via Lewis X moieties); this interaction is regulated by the glycosylation pattern of CEACAM1 on cell types and regulates contact between dendritic cells and neutrophils.

The protein localises to the membrane. In terms of biological role, pathogen-recognition receptor expressed on the surface of immature dendritic cells (DCs) and involved in initiation of primary immune response. Thought to mediate the endocytosis of pathogens which are subsequently degraded in lysosomal compartments. The receptor returns to the cell membrane surface and the pathogen-derived antigens are presented to resting T-cells via MHC class II proteins to initiate the adaptive immune response. Probably recognizes in a calcium-dependent manner high mannose N-linked oligosaccharides in a variety of pathogen antigens. Functionally, on DCs it is a high affinity receptor for ICAM2 and ICAM3 by binding to mannose-like carbohydrates. May act as a DC rolling receptor that mediates transendothelial migration of DC presursors from blood to tissues by binding endothelial ICAM2. Seems to regulate DC-induced T-cell proliferation by binding to ICAM3 on T-cells in the immunological synapse formed between DC and T-cells. The protein is CD209 antigen (CD209) of Gorilla gorilla gorilla (Western lowland gorilla).